The chain runs to 411 residues: MNVRISGEFRPGVINAPSSKSFSQRYILYSAFSNIPVTLKNVSFSDDERIALEIARACGADIEFNDSLTIKPDFRCPDEINAGESGTSLRLATGLLAARRCKTFIHEEASLLKRPLDDLIKTLSEKNVVFNNLDNGIMIDASNSIPSDSIIDGGRSSQFVSSMMMYHSLTSGSLKALNIVSNDYIKITIKTLNDFGISVYSSNGFFEFGKTLMKGNKICIEGDYSSAAFWIVLGLFKGDIEIKNLKSDSCQPDAAIINIINGISERKIDIYNNKIVVHKTRFLGDLYIDVDKNPDLAPPLSIIGIFSDVAVHILNYRRLEIKESNREENIISMARSFGALIEKNDNEMVIRRGKISLPERISFSDHRMIMSSIIAGLISSGDILYENIENINKSYPGFLNDLSNLGYYILK.

Residues lysine 20, serine 21, and arginine 25 each coordinate 3-phosphoshikimate. Residue lysine 20 participates in phosphoenolpyruvate binding. The phosphoenolpyruvate site is built by glycine 86 and arginine 114. Residues serine 156, serine 157, glutamine 158, serine 181, aspartate 295, and lysine 322 each contribute to the 3-phosphoshikimate site. Glutamine 158 serves as a coordination point for phosphoenolpyruvate. The active-site Proton acceptor is the aspartate 295. 3 residues coordinate phosphoenolpyruvate: arginine 326, arginine 367, and lysine 393.

Belongs to the EPSP synthase family. As to quaternary structure, monomer.

The protein resides in the cytoplasm. The enzyme catalyses 3-phosphoshikimate + phosphoenolpyruvate = 5-O-(1-carboxyvinyl)-3-phosphoshikimate + phosphate. Its pathway is metabolic intermediate biosynthesis; chorismate biosynthesis. In terms of biological role, catalyzes the transfer of the enolpyruvyl moiety of phosphoenolpyruvate (PEP) to the 5-hydroxyl of shikimate-3-phosphate (S3P) to produce enolpyruvyl shikimate-3-phosphate and inorganic phosphate. In Picrophilus torridus (strain ATCC 700027 / DSM 9790 / JCM 10055 / NBRC 100828 / KAW 2/3), this protein is 3-phosphoshikimate 1-carboxyvinyltransferase.